The sequence spans 916 residues: Probable serine/threonine-protein kinase DDB_G0267514 (916 aa).

Disordered regions lie at residues S283–S311, N461–D518, and F550–S646. Composition is skewed to low complexity over residues N461 to P493 and F550 to N622. The span at H623–S646 shows a compositional bias: polar residues. The region spanning L662 to P916 is the Protein kinase domain. Residues L668–V676 and K689 contribute to the ATP site. D784 (proton acceptor) is an active-site residue.

It belongs to the protein kinase superfamily. TKL Ser/Thr protein kinase family.

It catalyses the reaction L-seryl-[protein] + ATP = O-phospho-L-seryl-[protein] + ADP + H(+). The catalysed reaction is L-threonyl-[protein] + ATP = O-phospho-L-threonyl-[protein] + ADP + H(+). This is Probable serine/threonine-protein kinase DDB_G0267514 from Dictyostelium discoideum (Social amoeba).